A 248-amino-acid chain; its full sequence is Mannose-binding protein C (248 aa).

The signal sequence occupies residues 1–20 (MSLFPSLTLLLLSVVATSYS). The region spanning 42–99 (GINGFPGKDGRDGTKGEKGEPGQGLRGLQGPPGKLGPPGNPGSSGSPGPKGQKGDPGE) is the Collagen-like domain. Positions 43–113 (INGFPGKDGR…DSSLAASERK (71 aa)) are disordered. P47 carries the 4-hydroxyproline modification. Basic and acidic residues predominate over residues 49–61 (KDGRDGTKGEKGE). P73, P79, P82, and P88 each carry 4-hydroxyproline. The segment covering 82-91 (PGSSGSPGPK) has biased composition (low complexity). Residues 112 to 130 (RKALQTEMARIKKWLTFSL) adopt a coiled-coil conformation. Positions 134–245 (VGNKFFLTNG…CSSSHLALCE (112 aa)) constitute a C-type lectin domain. 2 disulfide bridges follow: C155/C244 and C222/C236.

In terms of assembly, oligomeric complex of 3 or more homotrimers. Interacts with MASP1 and MASP2. Interacts with MEP1A and MEP1B and may inhibit their catalytic activity. In terms of processing, hydroxylation on proline residues within the sequence motif, GXPG, is most likely to be 4-hydroxy as this fits the requirement for 4-hydroxylation in vertebrates.

It is found in the secreted. Calcium-dependent lectin involved in innate immune defense. Binds mannose, fucose and N-acetylglucosamine on different microorganisms and activates the lectin complement pathway. Binds to late apoptotic cells, as well as to apoptotic blebs and to necrotic cells, but not to early apoptotic cells, facilitating their uptake by macrophages. This chain is Mannose-binding protein C (MBL2), found in Chlorocebus aethiops (Green monkey).